The primary structure comprises 101 residues: NADH-quinone oxidoreductase subunit K (101 aa).

The next 3 membrane-spanning stretches (helical) occupy residues 4-24, 30-50, and 61-81; these read LGYF…GIII, IVLL…FIAF, and IFVF…LAIL.

Belongs to the complex I subunit 4L family. As to quaternary structure, NDH-1 is composed of 14 different subunits. Subunits NuoA, H, J, K, L, M, N constitute the membrane sector of the complex.

The protein localises to the cell inner membrane. It carries out the reaction a quinone + NADH + 5 H(+)(in) = a quinol + NAD(+) + 4 H(+)(out). NDH-1 shuttles electrons from NADH, via FMN and iron-sulfur (Fe-S) centers, to quinones in the respiratory chain. The immediate electron acceptor for the enzyme in this species is believed to be ubiquinone. Couples the redox reaction to proton translocation (for every two electrons transferred, four hydrogen ions are translocated across the cytoplasmic membrane), and thus conserves the redox energy in a proton gradient. In Coxiella burnetii (strain CbuG_Q212) (Coxiella burnetii (strain Q212)), this protein is NADH-quinone oxidoreductase subunit K.